We begin with the raw amino-acid sequence, 363 residues long: Succinyl-diaminopimelate desuccinylase (363 aa).

Position 63 (His63) interacts with Zn(2+). The active site involves Asp65. A Zn(2+)-binding site is contributed by Asp94. Catalysis depends on Glu123, which acts as the Proton acceptor. Zn(2+)-binding residues include Glu124, Glu152, and His337.

It belongs to the peptidase M20A family. DapE subfamily. As to quaternary structure, homodimer. Requires Zn(2+) as cofactor. The cofactor is Co(2+).

The catalysed reaction is N-succinyl-(2S,6S)-2,6-diaminopimelate + H2O = (2S,6S)-2,6-diaminopimelate + succinate. Its pathway is amino-acid biosynthesis; L-lysine biosynthesis via DAP pathway; LL-2,6-diaminopimelate from (S)-tetrahydrodipicolinate (succinylase route): step 3/3. Its function is as follows. Catalyzes the hydrolysis of N-succinyl-L,L-diaminopimelic acid (SDAP), forming succinate and LL-2,6-diaminopimelate (DAP), an intermediate involved in the bacterial biosynthesis of lysine and meso-diaminopimelic acid, an essential component of bacterial cell walls. In Campylobacter concisus (strain 13826), this protein is Succinyl-diaminopimelate desuccinylase.